The sequence spans 446 residues: Trigger factor (446 aa).

The PPIase FKBP-type domain maps to 182-267; the sequence is GDKVVVDYQN…VKNIFMMKAI (86 aa).

The protein belongs to the FKBP-type PPIase family. Tig subfamily.

Its subcellular location is the cytoplasm. The catalysed reaction is [protein]-peptidylproline (omega=180) = [protein]-peptidylproline (omega=0). Involved in protein export. Acts as a chaperone by maintaining the newly synthesized protein in an open conformation. Functions as a peptidyl-prolyl cis-trans isomerase. This is Trigger factor from Ehrlichia ruminantium (strain Gardel).